A 134-amino-acid chain; its full sequence is MNNLEKYRPYFLAFLRIVVAYMFILHGTAKFLEFPISMTGGNGAVGDPMLLVAGVIEIVGSILLILGLFTRQAAFILSVEMAYAYFFLHVAGKGNLFFPIANGGELALLYSLLFLYFVFSGAGACALDNKFFKK.

3 consecutive transmembrane segments (helical) span residues Pro-9 to Ala-29, Met-49 to Phe-69, and Ala-107 to Leu-127.

Belongs to the DoxX family.

The protein resides in the cell membrane. This is an uncharacterized protein from Haemophilus influenzae (strain ATCC 51907 / DSM 11121 / KW20 / Rd).